The sequence spans 358 residues: Septin-12 (358 aa).

Residues 1 to 25 form a disordered region; sequence MDPLRRSPSPCLSSQPSSPSTPPCE. Low complexity predominate over residues 6–18; that stretch reads RSPSPCLSSQPSS. The Septin-type G domain occupies 46-317; it reads MGFEFNIMVV…ENYRVIRLNE (272 aa). The interval 46-319 is interaction with SEPTIN7; it reads MGFEFNIMVV…YRVIRLNESH (274 aa). The interval 56 to 63 is G1 motif; sequence GQSGLGKS. GTP is bound by residues 56–63, Thr89, Gly115, 195–203, Gly251, and Arg266; these read GQSGLGKS and RADSLTMEE. The interval 112–115 is G3 motif; sequence DTPG. The interval 194-197 is G4 motif; it reads ARAD. Positions 258–358 are self-association (via N-terminus) to polymerize octameric septin 12-7-6-2/4-2/4-6-7-12 filaments; that stretch reads VNGRCVLGRK…GAHDDSDDEF (101 aa).

It belongs to the TRAFAC class TrmE-Era-EngA-EngB-Septin-like GTPase superfamily. Septin GTPase family. In terms of assembly, septins polymerize into heterooligomeric protein complexes that form filaments, and can associate with cellular membranes, actin filaments and microtubules. GTPase activity is required for filament formation. Interacts with SEPTIN6 and SEPTIN11. Self-associates. Component of a septin core octameric complex consisting of SEPTIN12, SEPTIN7, SEPTIN6 and SEPTIN2 or SEPTIN4 in the order 12-7-6-2-2-6-7-12 or 12-7-6-4-4-6-7-12 and located in the sperm annulus; the octamer polymerizes into filaments via the SEPTIN12 N- and C-termini; the SEPTIN12:SEPTIN7 association is mediated by the respective GTP-binding domains. Interacts with SPAG4 and LMNB1. Associates with alpha- and beta-tubulins. As to expression, widely expressed. Expressed in lymph node.

It is found in the cytoplasm. It localises to the cytoskeleton. The protein resides in the spindle. The protein localises to the nucleus. Its subcellular location is the cell projection. It is found in the cilium. It localises to the flagellum. Its function is as follows. Filament-forming cytoskeletal GTPase. Involved in spermatogenesis. Involved in the morphogenesis of sperm heads and the elongation of sperm tails probably implicating the association with alpha- and beta-tubulins. Forms a filamentous structure with SEPTIN7, SEPTIN6, SEPTIN2 and probably SEPTIN4 at the sperm annulus which is required for the structural integrity and motility of the sperm tail during postmeiotic differentiation. May play a role in cytokinesis (Potential). The polypeptide is Septin-12 (Homo sapiens (Human)).